The primary structure comprises 580 residues: Serine/threonine-protein kinase srk1 (580 aa).

A compositionally biased stretch (polar residues) spans 51–61 (VADSTQNPTSK). Residues 51-91 (VADSTQNPTSKPKSRHAHFHETVHENPSEYSRSKCKQPTNE) form a disordered region. The Protein kinase domain occupies 124 to 421 (YTLLQKMGDG…IHQFLAHPWI (298 aa)). Residues 130–138 (MGDGAFSNV) and lysine 153 each bind ATP. Aspartate 257 functions as the Proton acceptor in the catalytic mechanism. The disordered stretch occupies residues 530–580 (NLSGENDPSLASRQPAQSQQQSSQRSRNKFKGFQLNLSKATLYNRRHRQKV). Over residues 537–554 (PSLASRQPAQSQQQSSQR) the composition is skewed to low complexity.

The protein belongs to the protein kinase superfamily. CAMK Ser/Thr protein kinase family. CaMK subfamily. The cofactor is Mg(2+). Phosphorylated by sty1.

The protein resides in the cytoplasm. It localises to the nucleus. The protein localises to the nucleolus. It is found in the spore core. It carries out the reaction L-seryl-[protein] + ATP = O-phospho-L-seryl-[protein] + ADP + H(+). The catalysed reaction is L-threonyl-[protein] + ATP = O-phospho-L-threonyl-[protein] + ADP + H(+). Functionally, delays the mitotic G2/M transition by promoting nuclear exclusion of cdc25. During osmotic stress, inhibits the G2/M transition in a sty1 stress-activated MAPK pathway-dependent manner. The protein is Serine/threonine-protein kinase srk1 of Schizosaccharomyces pombe (strain 972 / ATCC 24843) (Fission yeast).